The chain runs to 953 residues: Leucine-rich repeat receptor protein kinase HPCA1 (953 aa).

The N-terminal stretch at 1 to 23 (MSSRTGASLLLILFFFQICSVSA) is a signal peptide. Over 24–558 (LTNGLDASAL…EVSSKSSNKS (535 aa)) the chain is Extracellular. 6 LRR repeats span residues 64–88 (NDRV…ISFL), 89–113 (SELR…IGNL), 115–137 (KLRN…IGTL), 138–162 (KELI…GLLS), 164–187 (LYWF…TSAP), and 192–216 (LLQT…LFSS). Asparagine 182 carries N-linked (GlcNAc...) asparagine glycosylation. A glycan (N-linked (GlcNAc...) asparagine) is linked at asparagine 217. LRR repeat units follow at residues 218 to 241 (MSLI…LSLV), 242 to 265 (KTLT…LNNL), 266 to 290 (TNLN…SLTS), 292 to 311 (YTLD…SWIS), 313 to 337 (LPSL…FFSP), 339 to 361 (QLQT…TDVS), and 362 to 384 (SQLE…ANKV). Residues asparagine 264, asparagine 284, and asparagine 298 are each glycosylated (N-linked (GlcNAc...) asparagine). Asparagine 411 carries an N-linked (GlcNAc...) asparagine glycan. Disulfide bonds link cysteine 421–cysteine 424 and cysteine 434–cysteine 436. Asparagine 456, asparagine 459, asparagine 510, and asparagine 523 each carry an N-linked (GlcNAc...) asparagine glycan. A helical transmembrane segment spans residues 559-579 (ILIGAVVGVVVLLLLLTIAGI). The Cytoplasmic portion of the chain corresponds to 580-953 (YALRQKKRAE…NFPASKLEPQ (374 aa)). Phosphoserine occurs at positions 606 and 607. The 275-residue stretch at 631-905 (FSEANDVGGG…EVVKEIENIM (275 aa)) folds into the Protein kinase domain. Residues 637–645 (VGGGGYGKV) and lysine 659 contribute to the ATP site. Catalysis depends on aspartate 755, which acts as the Proton acceptor. 3 positions are modified to phosphothreonine: threonine 786, threonine 789, and threonine 790. The span at 912-921 (PNSDSATSSR) shows a compositional bias: polar residues. Positions 912–953 (PNSDSATSSRTYEDAIKGSGDPYGSESFQYSGNFPASKLEPQ) are disordered. Position 942 is a phosphoserine (serine 942).

It belongs to the protein kinase superfamily. Ser/Thr protein kinase family. Post-translationally, autophosphorylated at Ser-606, Ser-607, Thr-786, Thr-789, Thr-790 and Ser-942 in response to extracellular hydrogen peroxide. As to expression, widely expressed.

It is found in the cell membrane. The enzyme catalyses L-seryl-[protein] + ATP = O-phospho-L-seryl-[protein] + ADP + H(+). The catalysed reaction is L-threonyl-[protein] + ATP = O-phospho-L-threonyl-[protein] + ADP + H(+). Activated by autophosphorylation on serine and threonine residues in response to extracellular hydrogen peroxide. Its function is as follows. Leucine-rich repeat receptor protein kinase that acts as sensor of extracellular hydrogen peroxide. Required for intracellular calcium influx in response to extracellular hydrogen peroxide. Mediates hydrogen peroxide-induced activation of calcium channels in guard cells and is required for stomatal closure. In Arabidopsis thaliana (Mouse-ear cress), this protein is Leucine-rich repeat receptor protein kinase HPCA1.